Here is a 262-residue protein sequence, read N- to C-terminus: 3-deoxy-manno-octulosonate cytidylyltransferase (262 aa).

The protein belongs to the KdsB family.

Its subcellular location is the cytoplasm. The enzyme catalyses 3-deoxy-alpha-D-manno-oct-2-ulosonate + CTP = CMP-3-deoxy-beta-D-manno-octulosonate + diphosphate. It functions in the pathway nucleotide-sugar biosynthesis; CMP-3-deoxy-D-manno-octulosonate biosynthesis; CMP-3-deoxy-D-manno-octulosonate from 3-deoxy-D-manno-octulosonate and CTP: step 1/1. Its pathway is bacterial outer membrane biogenesis; lipopolysaccharide biosynthesis. In terms of biological role, activates KDO (a required 8-carbon sugar) for incorporation into bacterial lipopolysaccharide in Gram-negative bacteria. This is 3-deoxy-manno-octulosonate cytidylyltransferase from Acidovorax ebreus (strain TPSY) (Diaphorobacter sp. (strain TPSY)).